The primary structure comprises 281 residues: Transmembrane protein 41A-A (281 aa).

A signal peptide spans 1-22 (MRSLVGLVAVIVTATFYLYSLS). The disordered stretch occupies residues 32-56 (HKQSHEGETTDAKDGDEPSEMETAS). A compositionally biased stretch (basic and acidic residues) spans 34 to 47 (QSHEGETTDAKDGD). The next 5 helical transmembrane spans lie at 84-104 (GYVL…AIPG), 107-127 (FLNI…LTCV), 170-190 (LFFF…FLNM), 197-217 (IPVT…NFIC), and 236-256 (WSVV…GALI).

Belongs to the TMEM41 family.

Its subcellular location is the membrane. The chain is Transmembrane protein 41A-A (tmem41aa) from Danio rerio (Zebrafish).